An 89-amino-acid polypeptide reads, in one-letter code: Small ribosomal subunit protein uS19 (89 aa).

This sequence belongs to the universal ribosomal protein uS19 family.

In terms of biological role, protein S19 forms a complex with S13 that binds strongly to the 16S ribosomal RNA. The protein is Small ribosomal subunit protein uS19 of Porphyromonas gingivalis (strain ATCC 33277 / DSM 20709 / CIP 103683 / JCM 12257 / NCTC 11834 / 2561).